Here is a 325-residue protein sequence, read N- to C-terminus: Fructose-1,6-bisphosphatase class 1 (325 aa).

Positions 84, 103, 105, and 106 each coordinate Mg(2+). Residues 106–109 (DGSS), Asn-196, and Lys-262 each bind substrate. A Mg(2+)-binding site is contributed by Glu-268.

The protein belongs to the FBPase class 1 family. In terms of assembly, homotetramer. The cofactor is Mg(2+).

The protein resides in the cytoplasm. The catalysed reaction is beta-D-fructose 1,6-bisphosphate + H2O = beta-D-fructose 6-phosphate + phosphate. Its pathway is carbohydrate biosynthesis; gluconeogenesis. This Shewanella baltica (strain OS195) protein is Fructose-1,6-bisphosphatase class 1.